We begin with the raw amino-acid sequence, 237 residues long: MIDNLIKRTPEINRLLENKRVTGVVTFVNPYSYYKIKEYNKISQLDYIYIDGILLLKLFNFVNGTKIKRHSFDYSSIAKTVFNYSIQNKMKIGLIGSKDYEIEQAVKNIRKKHPGIDISYFHSGYFSSLEEKSSVIDSVIKKSDIIICGLGTPAQEELALDIKIKSNEHLIFTCGGFFTQTASRADFYYPWIKRYNLMWLQRIVLYKHVRKRFFIDYPKFIVRFISENLMKIFTRSN.

Glu101 functions as the Nucleophile in the catalytic mechanism.

Belongs to the glycosyltransferase 26 family. Requires Mn(2+) as cofactor. The cofactor is Ni(2+). Pb(2+) is required as a cofactor.

The catalysed reaction is N-acetyl-alpha-D-glucosaminyl-di-trans,octa-cis-undecaprenyl diphosphate + UDP-alpha-D-galactose = beta-D-Gal-(1-&gt;4)-alpha-D-GlcNAc-di-trans,octa-cis-undecaprenyl diphosphate + UDP + H(+). It participates in bacterial outer membrane biogenesis; LPS O-antigen biosynthesis. Functionally, galactosyltransferase that adds one galactose residue in the beta-1-4 linkage to GlcNAc-alpha-pyrophosphate-lipid in the biosynthesis of the O-polysaccharide repeating unit of the O antigen. The protein is UDP-Gal:alpha-D-GlcNAc-diphosphoundecaprenol beta-1,4-galactosyltransferase (wfeD) of Shigella boydii.